Here is a 654-residue protein sequence, read N- to C-terminus: Fatty acid photodecarboxylase, chloroplastic (654 aa).

Residues 1–62 (MASITSRASA…RRGGALSARA (62 aa)) constitute a chloroplast transit peptide. FAD-binding positions include 93–94 (TA), Glu-114, Leu-162, Ser-166, 170–173 (NATL), and Val-298. Residues Cys-432, Arg-451, Tyr-466, and Gln-486 each contribute to the hexadecanoate site. Position 622 (Gly-622) interacts with FAD.

The protein belongs to the GMC oxidoreductase family. FAD is required as a cofactor.

The protein localises to the plastid. It is found in the chloroplast. The enzyme catalyses a long-chain fatty acid + hnu + H(+) = a long-chain alkane + CO2. It carries out the reaction hnu + hexadecanoate + H(+) = pentadecane + CO2. It catalyses the reaction hnu + octadecanoate + H(+) = heptadecane + CO2. The catalysed reaction is heptadecanoate + hnu + H(+) = hexadecane + CO2. The enzyme catalyses hnu + tetradecanoate + H(+) = tridecane + CO2. It carries out the reaction octanoate + hnu + H(+) = heptane + CO2. Its activity is regulated as follows. Activated by blue light and repressed by red light. In terms of biological role, catalyzes the decarboxylation of free fatty acids to n-alkanes or n-alkenes in response to blue light. Substrate preference is toward fatty acids with C16 or C17 chains. Converts n-octanoic acid (C8 chain) more efficiently than palmitate (n-hexadecanoic acid, C16 chain) into n-heptane (C7 chain) and n-pentadecane (C15 chain), respectively, partly due to an autocatalytic effect of its n-heptane product. Saturated fatty acids are converted to alkanes, not alkenes. The decarboxylation is initiated through electron abstraction from the fatty acid by the photo-excited FAD. This chain is Fatty acid photodecarboxylase, chloroplastic, found in Chlorella variabilis (Green alga).